A 710-amino-acid chain; its full sequence is MINALSCIATEKVAHYINDGIYRNLKYKLDSKSSDQVYSKLLKISRGLIHEYNHEIGQRLELRNVDYGKFKIDRNTVMVLKKHCLESLGIGDLDYIGYYYRDLIDDNTIDIFELLKAILNNETRRNLHYLDIKGSHAFSKKWTKNIGTILPVLRSLIICGRHLQSDDFQQLCESIPNLTYLDISETNVPNISGISSLKNLESLIMRSVELECFEQFVDLFNLTGLRILDVSRSMYKHDTKIINQYVQSNKVLKELRFLECSGTDINKNLLEQILNSHDNLQQVAAINCHIRSLSLHHEVFLLNTATLTSSLKSLTHYLGVHRISSVERVLENMLHLFPKYDPDLDNRFDFSECVKIIINSALKIESSLGIQGYGTLCLWHIARNQDARFQPFDLYQLVCKLLDGVYNNGRLFIATKDFNISLWRTIESLLKLLESSLKPMSYERVCRIAGLCISRNEVDDEMKTRAIPIFATYIKRISSQSVYYIDFNHKLMPKIILHLKKSIELRKTYWITFCLDILTQITQNSADACEKLAECEEMNVLLECFGNLTKASDHLKILKILKNVLLELTDKNVKHVAIDARISVLQERLDEWDDERAYYVFTVLALIISNFPTIVNREPANSLIRECFPEISNVIKIPVSDSKIYVKNGILKKILKDSREDGSLLWALLVIKSSMEQDKSFVNLLTTEMSNLNTNSEIIMNMKAEIKNLI.

The chain crosses the membrane as a helical span at residues 597–615 (AYYVFTVLALIISNFPTIV).

The protein localises to the membrane. In Caenorhabditis elegans, this protein is Gastrulation-defective protein 3 (gadr-3).